Here is a 544-residue protein sequence, read N- to C-terminus: CTP synthase (544 aa).

Residues 1–265 (MTKFIFVTGG…DNIITEQLQL (265 aa)) form an amidoligase domain region. Serine 13 contacts CTP. UTP is bound at residue serine 13. Residues 14-19 (SLGKGI) and aspartate 71 contribute to the ATP site. Mg(2+)-binding residues include aspartate 71 and glutamate 139. Residues 146–148 (DIE), 186–191 (KTKPTQ), and lysine 222 each bind CTP. UTP is bound by residues 186-191 (KTKPTQ) and lysine 222. The Glutamine amidotransferase type-1 domain maps to 290 to 544 (KIAMVGKYVD…VKAALNNKKA (255 aa)). Position 353 (glycine 353) interacts with L-glutamine. Residue cysteine 380 is the Nucleophile; for glutamine hydrolysis of the active site. Residues 381 to 384 (LGMQ), glutamate 404, and arginine 471 each bind L-glutamine. Residues histidine 517 and glutamate 519 contribute to the active site.

Belongs to the CTP synthase family. Homotetramer.

It catalyses the reaction UTP + L-glutamine + ATP + H2O = CTP + L-glutamate + ADP + phosphate + 2 H(+). The catalysed reaction is L-glutamine + H2O = L-glutamate + NH4(+). It carries out the reaction UTP + NH4(+) + ATP = CTP + ADP + phosphate + 2 H(+). Its pathway is pyrimidine metabolism; CTP biosynthesis via de novo pathway; CTP from UDP: step 2/2. Allosterically activated by GTP, when glutamine is the substrate; GTP has no effect on the reaction when ammonia is the substrate. The allosteric effector GTP functions by stabilizing the protein conformation that binds the tetrahedral intermediate(s) formed during glutamine hydrolysis. Inhibited by the product CTP, via allosteric rather than competitive inhibition. In terms of biological role, catalyzes the ATP-dependent amination of UTP to CTP with either L-glutamine or ammonia as the source of nitrogen. Regulates intracellular CTP levels through interactions with the four ribonucleotide triphosphates. This is CTP synthase from Neisseria meningitidis serogroup B (strain ATCC BAA-335 / MC58).